The chain runs to 179 residues: Protein GrpE (179 aa).

Residues 1-20 (MSEETKEEIKNEKVDEEVTE) are disordered.

Belongs to the GrpE family. In terms of assembly, homodimer.

It localises to the cytoplasm. Its function is as follows. Participates actively in the response to hyperosmotic and heat shock by preventing the aggregation of stress-denatured proteins, in association with DnaK and GrpE. It is the nucleotide exchange factor for DnaK and may function as a thermosensor. Unfolded proteins bind initially to DnaJ; upon interaction with the DnaJ-bound protein, DnaK hydrolyzes its bound ATP, resulting in the formation of a stable complex. GrpE releases ADP from DnaK; ATP binding to DnaK triggers the release of the substrate protein, thus completing the reaction cycle. Several rounds of ATP-dependent interactions between DnaJ, DnaK and GrpE are required for fully efficient folding. The sequence is that of Protein GrpE from Lactococcus lactis subsp. cremoris (strain MG1363).